We begin with the raw amino-acid sequence, 547 residues long: Glutamyl-tRNA(Gln) amidotransferase subunit B, mitochondrial (547 aa).

The protein belongs to the GatB/GatE family. GatB subfamily. Subunit of the heterotrimeric GatFAB amidotransferase (AdT) complex, composed of A, B and F subunits.

It localises to the mitochondrion. The catalysed reaction is L-glutamyl-tRNA(Gln) + L-glutamine + ATP + H2O = L-glutaminyl-tRNA(Gln) + L-glutamate + ADP + phosphate + H(+). Functionally, allows the formation of correctly charged Gln-tRNA(Gln) through the transamidation of misacylated Glu-tRNA(Gln) in the mitochondria. The reaction takes place in the presence of glutamine and ATP through an activated gamma-phospho-Glu-tRNA(Gln). The protein is Glutamyl-tRNA(Gln) amidotransferase subunit B, mitochondrial of Lachancea thermotolerans (strain ATCC 56472 / CBS 6340 / NRRL Y-8284) (Yeast).